A 167-amino-acid polypeptide reads, in one-letter code: Iron-sulfur cluster assembly enzyme ISCU (167 aa).

A mitochondrion-targeting transit peptide spans 1 to 34 (MAAAGAFRLRRAASALLLRSPRLPARELSAPARL). The residue at position 14 (Ser14) is a Phosphoserine; by MTOR. Zn(2+) is bound at residue Pro46. Cys69 acts as the Cysteine persulfide intermediate in catalysis. Cysteine persulfide is present on Cys69. Zn(2+)-binding residues include Gly70, Asp71, Cys95, Lys112, and Cys138. The Cysteine persulfide intermediate role is filled by Cys138. At Cys138 the chain carries Cysteine persulfide.

Belongs to the NifU family. In terms of assembly, homodimer; Tyr-35-mediated dimerization of two iron- and sulfide-containing ISCU subunit bind to the cysteine desulfurase complex. Component of the mitochondrial core iron-sulfur cluster (ISC) complex composed of NFS1, LYRM4, NDUFAB1, ISCU, FXN, and FDX2; this complex is an heterohexamer containing two copies of each monomer. Interacts (D-state) with NFS1 (homodimer form); each monomer interacts with the C-terminal regions of each NFS1 monomer. Interacts (monomer form) with FXN (via ferrous form); the interaction is possible when both are bound to the dimeric form of the cysteine desulfurase complex (NFS1:LYRM4) and enhances FXN interaction to the dimeric form of the cysteine desulfurase complex (NFS1:LYRM4). Interacts with GLRX5. Interacts (D-state) with HSPA9. Interacts (S-state) with HSCB; this interaction stimulates the ATPase activity of HSPA9. As to quaternary structure, component of the cytoplasmic core iron-sulfur cluster (ISC) complex composed at least of NFS1, LYRM4, and ISCU; this complex interacts with FXN. Monomer; each monomer binds to the C-terminal regions of NFS1 (cytoplasmic and homodimer form). Interacts with NFS1 (cytoplasmic and homodimer form); this interaction promotes de novo iron-sulfur cluster formation. Interacts with HSCB (cytoplasmic form); this interaction stabilizes the (Fe-S) clusters on ISCU. Phosphorylation at Ser-14 is required for ISCU protein stabilization in the cytosol, whereas dephosphorylation of Ser-14, due to the inhibition of mTORC1 (mammalian target of rapamycin complex 1) complex, leads to degradation of the precursor form and ultimately to a decrease in the mitochondrial mature form. Post-translationally, cysteine persulfide is reduced by thiol-containing molecules such as glutathione and L-cysteine. Detected in heart, liver, skeletal muscle, brain, pancreas, kidney, lung and placenta.

It is found in the mitochondrion. The protein resides in the cytoplasm. Its subcellular location is the nucleus. In terms of biological role, mitochondrial scaffold protein, of the core iron-sulfur cluster (ISC) assembly complex, that provides the structural architecture on which the [2Fe-2S] clusters are assembled. The core iron-sulfur cluster (ISC) assembly complex is involved in the de novo synthesis of a [2Fe-2S] cluster, the first step of the mitochondrial iron-sulfur protein biogenesis. This process is initiated by the cysteine desulfurase complex (NFS1:LYRM4:NDUFAB1) that produces persulfide which is delivered on the scaffold protein ISCU in a FXN-dependent manner. Then this complex is stabilized by FDX2 which provides reducing equivalents to accomplish the [2Fe-2S] cluster assembly. Finally, the [2Fe-2S] cluster is transferred from ISCU to chaperone proteins, including HSCB, HSPA9 and GLRX5. Exists as two slow interchanging conformational states, a structured (S) and disordered (D) form. May modulate NFS1 desulfurase activity in a zinc-dependent manner. Modulates the interaction between FXN and the cysteine desulfurase complex. Its function is as follows. Cytoplasmic scaffold protein, of the cytoplasmic core iron-sulfur cluster (ISC) assembly complex that provides the structural architecture on which the Fe-S clusters are assembled and may be involved in the cytoplasmic iron-sulfur protein biogenesis. This is Iron-sulfur cluster assembly enzyme ISCU from Homo sapiens (Human).